A 198-amino-acid chain; its full sequence is Suppressor of cytokine signaling 2 (198 aa).

The interval 1 to 29 (MTLRCLEPSGNGGEGTRSQWGTAGSAEEP) is disordered. The tract at residues 1 to 75 (MTLRCLEPSG…PEGTFLIRDS (75 aa)) is interaction with AREL1. Ser30 carries the post-translational modification Phosphoserine. The region spanning 48-156 (WYWGSMTVNE…TVHLYLTKPL (109 aa)) is the SH2 domain. Ser52 bears the Phosphoserine; by PKC mark. The SOCS box domain occupies 151–197 (YLTKPLYTSAPSLQHLCRLTINKCTGAIWGLPLPTRLKDYLEEYKFQ). Residue Lys173 forms a Glycyl lysine isopeptide (Lys-Gly) (interchain with G-Cter in ubiquitin) linkage.

In terms of assembly, substrate-recognition component of the ECS(SOCS2) complex, composed of SOCS2, CUL5, ELOB, ELOC and RNF7/RBX2. Interacts with IGF1R. Interacts with DCUN1D1. In terms of processing, ubiquitinated; mediated by AREL1 and leading to its subsequent proteasomal degradation. Ubiquitination is dependent on its phosphorylation at Ser-52, by PKC. Ubiquitination is stimulated by LPS. Post-translationally, phosphorylation at Ser-52 by PKC facilitates its ubiquitination and proteasomal degradation. In terms of tissue distribution, high expression in heart, placenta, lung, kidney and prostate. Predominantly expressed in pulmonary epithelia cells, specifically type II pneumocytes.

It is found in the cytoplasm. It functions in the pathway protein modification; protein ubiquitination. Its activity is regulated as follows. Substrate-binding is prevented by the covalent inhibitor MN551 that cross-links with Cys-111. Also inhibited by a MN551 derivative, MN714, which contains a pivaloyloxymethyl that allows cell permeability. Functionally, substrate-recognition component of a cullin-5-RING E3 ubiquitin-protein ligase complex (ECS complex, also named CRL5 complex), which mediates the ubiquitination and subsequent proteasomal degradation of target proteins, such as EPOR and GHR. Specifically recognizes and binds phosphorylated proteins via its SH2 domain, promoting their ubiquitination. The ECS(SOCS2) complex acts as a key regulator of growth hormone receptor (GHR) levels by mediating ubiquitination and degradation of GHR, following GHR phosphorylation by JAK2. The ECS(SOCS2) also catalyzes ubiquitination and degradation of JAK2-phosphorylated EPOR. The sequence is that of Suppressor of cytokine signaling 2 from Homo sapiens (Human).